Here is a 688-residue protein sequence, read N- to C-terminus: MFKKLFGQLQRIGKALMLPVAILPAAGILLAFGNAMHNEQLVEIAPWLKNDIIVMISSVMEAAGQVVFDNLPLLFAVGTALGLAGGDGVAALAALVGYLIMNATMGKVLHITIDDIFSYAKGAKELSQAAKEPAHALVLGIPTLQTGVFGGIIMGALAAWCYNKFYNITLPPFLGFFAGKRFVPIVTSVVAIATGVLLSFAWPPIQDGLNSLSNFLLNKNLTLTTFIFGIIERSLIPFGLHHIFYSPFWFEFGSYTNHAGELVRGDQRIWMAQLKDGVPFTAGAFTTGKYPFMMFGLPAAAFAIYKNARPERKKVVGGLMLSAGLTAFLTGITEPLEFSFLFVAPVLYGIHVLLAGTSFLVMHLLGVKIGMTFSGGFIDYILYGLLNWDRSHALLVIPVGIVYAIVYYFLFDFAIRKFKLKTPGREDEETEIRNSSVAKLPFDVLDAMGGKENIKHLDACITRLRVEVVDKSKVDVAGIKALGASGVLEVGNNMQAIFGPKSDQIKHDMAKIMSGEITKPSETTVTEEMSDEPVHVEALGTTDIYAPGVGQIIPLSEVPDQVFAGKMMGDGIGFIPEKGEIVAPFDGTVKTIFPTKHAIGLESESGVEVLIHIGIDTVKLNGEGFESLINVDEKVTQAQPLMKVNLAYLKAHAPSIVTPMIITNLENKELVIEDVQDADPGKLIMTVK.

The PTS EIIC type-1 domain maps to 3–427 (KKLFGQLQRI…FKLKTPGRED (425 aa)). 10 consecutive transmembrane segments (helical) span residues 12-32 (IGKA…LLAF), 81-101 (LGLA…YLIM), 137-157 (LVLG…MGAL), 182-202 (FVPI…SFAW), 223-243 (LTTF…LHHI), 284-304 (AFTT…AFAI), 315-335 (VVGG…ITEP), 340-360 (FLFV…TSFL), 364-384 (LLGV…ILYG), and 395-415 (LVIP…DFAI). Residues 438–519 (AKLPFDVLDA…AKIMSGEITK (82 aa)) form the PTS EIIB type-1 domain. The Phosphocysteine intermediate; for EIIB activity role is filled by cysteine 460. In terms of domain architecture, PTS EIIA type-1 spans 560–664 (DQVFAGKMMG…SIVTPMIITN (105 aa)). Residue histidine 612 is the Tele-phosphohistidine intermediate; for EIIA activity of the active site.

It is found in the cell membrane. Its function is as follows. The phosphoenolpyruvate-dependent sugar phosphotransferase system (sugar PTS), a major carbohydrate active -transport system, catalyzes the phosphorylation of incoming sugar substrates concomitantly with their translocation across the cell membrane. This system is involved in alpha- and beta-glucoside transport. This Staphylococcus aureus (strain Mu3 / ATCC 700698) protein is PTS system glucoside-specific EIICBA component (glcB).